A 473-amino-acid chain; its full sequence is Lactate utilization protein B (473 aa).

4Fe-4S ferredoxin-type domains lie at 302–332 and 351–380; these read GSEF…GHSY and YDDY…LHDL. [4Fe-4S] cluster-binding residues include cysteine 311, cysteine 314, cysteine 317, cysteine 321, cysteine 364, cysteine 367, and cysteine 371.

This sequence belongs to the LutB/YkgF family.

Its function is as follows. Is involved in L-lactate degradation and allows cells to grow with lactate as the sole carbon source. Has probably a role as an electron transporter during oxidation of L-lactate. This Bacillus cereus (strain G9842) protein is Lactate utilization protein B.